Consider the following 326-residue polypeptide: Malate dehydrogenase (326 aa).

11–17 (GAAGQIG) lines the NAD(+) pocket. Residues Arg-92 and Arg-98 each coordinate substrate. NAD(+)-binding positions include Asn-105, Gln-112, and 129 to 131 (VGN). Residues Asn-131 and Arg-162 each coordinate substrate. The active-site Proton acceptor is the His-187.

This sequence belongs to the LDH/MDH superfamily. MDH type 2 family.

It carries out the reaction (S)-malate + NAD(+) = oxaloacetate + NADH + H(+). Its function is as follows. Catalyzes the reversible oxidation of malate to oxaloacetate. The protein is Malate dehydrogenase of Alkalilimnicola ehrlichii (strain ATCC BAA-1101 / DSM 17681 / MLHE-1).